The chain runs to 433 residues: 23S rRNA (uracil(1939)-C(5))-methyltransferase RlmD (433 aa).

In terms of domain architecture, TRAM spans 1–53; it reads MPVAVIESLDHEGRGVAHVDGKVVFVEGALAGEQVEYTVYRQRPSYDLAEATR. Positions 66, 72, 75, and 154 each coordinate [4Fe-4S] cluster. Residues Gln263, Phe292, Asn297, Glu313, Asn341, and Asp362 each coordinate S-adenosyl-L-methionine. Cys389 acts as the Nucleophile in catalysis.

This sequence belongs to the class I-like SAM-binding methyltransferase superfamily. RNA M5U methyltransferase family. RlmD subfamily.

The enzyme catalyses uridine(1939) in 23S rRNA + S-adenosyl-L-methionine = 5-methyluridine(1939) in 23S rRNA + S-adenosyl-L-homocysteine + H(+). In terms of biological role, catalyzes the formation of 5-methyl-uridine at position 1939 (m5U1939) in 23S rRNA. The protein is 23S rRNA (uracil(1939)-C(5))-methyltransferase RlmD of Aromatoleum aromaticum (strain DSM 19018 / LMG 30748 / EbN1) (Azoarcus sp. (strain EbN1)).